Reading from the N-terminus, the 165-residue chain is Glutamyl-tRNA(Gln) amidotransferase subunit F, mitochondrial (165 aa).

Residues 1 to 19 constitute a mitochondrion transit peptide; that stretch reads MKSILRSTTRNLITSSRRF.

The protein belongs to the GatF family. In terms of assembly, subunit of the heterotrimeric GatFAB amidotransferase (AdT) complex, composed of A, B and F subunits.

Its subcellular location is the mitochondrion inner membrane. The catalysed reaction is L-glutamyl-tRNA(Gln) + L-glutamine + ATP + H2O = L-glutaminyl-tRNA(Gln) + L-glutamate + ADP + phosphate + H(+). Its function is as follows. Allows the formation of correctly charged Gln-tRNA(Gln) through the transamidation of misacylated Glu-tRNA(Gln) in the mitochondria. The reaction takes place in the presence of glutamine and ATP through an activated gamma-phospho-Glu-tRNA(Gln). Required for proper protein synthesis within the mitochondrion. This chain is Glutamyl-tRNA(Gln) amidotransferase subunit F, mitochondrial, found in Candida albicans (strain SC5314 / ATCC MYA-2876) (Yeast).